A 382-amino-acid polypeptide reads, in one-letter code: tRNA (guanine(26)-N(2))-dimethyltransferase (382 aa).

Positions 4-370 (TEVIEGKARL…REFSEILECV (367 aa)) constitute a Trm1 methyltransferase domain. Positions 44, 69, 87, 113, and 114 each coordinate S-adenosyl-L-methionine. 4 residues coordinate Zn(2+): Cys244, Cys247, Cys261, and Cys264.

The protein belongs to the class I-like SAM-binding methyltransferase superfamily. Trm1 family.

It catalyses the reaction guanosine(26) in tRNA + 2 S-adenosyl-L-methionine = N(2)-dimethylguanosine(26) in tRNA + 2 S-adenosyl-L-homocysteine + 2 H(+). Its function is as follows. Dimethylates a single guanine residue at position 26 of a number of tRNAs using S-adenosyl-L-methionine as donor of the methyl groups. This chain is tRNA (guanine(26)-N(2))-dimethyltransferase, found in Metallosphaera sedula (strain ATCC 51363 / DSM 5348 / JCM 9185 / NBRC 15509 / TH2).